The following is a 1231-amino-acid chain: uncharacterized protein (1231 aa).

Disordered regions lie at residues 171–197, 210–259, and 389–547; these read LKPD…QHDD, DESF…HLPT, and ASPR…RSSR. Over residues 440–450 the composition is skewed to basic residues; that stretch reads RSRHSHKRRSI. 4 positions are modified to phosphoserine: S449, S451, S453, and S455. A compositionally biased stretch (basic residues) spans 458-502; that stretch reads RGGRRAVRRSRSRSPRRSYNRGSTRSRSRSMRHRSRSPAHYRGRG. The span at 503 to 541 shows a compositional bias: basic and acidic residues; that stretch reads RGREPASKERGSSSRDFGGRHSLQRERERSSEYYHRNEG. The residue at position 549 (Y549) is a Phosphotyrosine. Disordered regions lie at residues 570–591, 950–981, and 1058–1203; these read KTSS…ASEP, PNLD…DDEE, and TLSK…PPFN. Phosphoserine is present on residues S573 and S589. A Phosphothreonine modification is found at T970. S972 carries the post-translational modification Phosphoserine. A compositionally biased stretch (polar residues) spans 1076 to 1103; sequence YMMNQQHGAPNAQNAPNLGQNPGQNLGQ. Residues 1118 to 1127 are compositionally biased toward low complexity; it reads QQQQQQQQQQ. Residues 1178 to 1203 are compositionally biased toward pro residues; it reads PPGPGGYVGPPPNPWASNVPPQPPFN.

This is an uncharacterized protein from Drosophila melanogaster (Fruit fly).